The following is an 87-amino-acid chain: Small ribosomal subunit protein bS20 (87 aa).

This sequence belongs to the bacterial ribosomal protein bS20 family.

Binds directly to 16S ribosomal RNA. The chain is Small ribosomal subunit protein bS20 from Corynebacterium urealyticum (strain ATCC 43042 / DSM 7109).